The primary structure comprises 96 residues: Putative pterin-4-alpha-carbinolamine dehydratase (96 aa).

Belongs to the pterin-4-alpha-carbinolamine dehydratase family.

It carries out the reaction (4aS,6R)-4a-hydroxy-L-erythro-5,6,7,8-tetrahydrobiopterin = (6R)-L-erythro-6,7-dihydrobiopterin + H2O. This is Putative pterin-4-alpha-carbinolamine dehydratase from Caulobacter sp. (strain K31).